The chain runs to 179 residues: Large ribosomal subunit protein uL5 (179 aa).

The protein belongs to the universal ribosomal protein uL5 family. As to quaternary structure, part of the 50S ribosomal subunit; part of the 5S rRNA/L5/L18/L25 subcomplex. Contacts the 5S rRNA and the P site tRNA. Forms a bridge to the 30S subunit in the 70S ribosome.

Functionally, this is one of the proteins that bind and probably mediate the attachment of the 5S RNA into the large ribosomal subunit, where it forms part of the central protuberance. In the 70S ribosome it contacts protein S13 of the 30S subunit (bridge B1b), connecting the 2 subunits; this bridge is implicated in subunit movement. Contacts the P site tRNA; the 5S rRNA and some of its associated proteins might help stabilize positioning of ribosome-bound tRNAs. The chain is Large ribosomal subunit protein uL5 from Delftia acidovorans (strain DSM 14801 / SPH-1).